The following is a 727-amino-acid chain: 1,4-alpha-glucan branching enzyme GlgB (727 aa).

Catalysis depends on aspartate 411, which acts as the Nucleophile. Catalysis depends on glutamate 464, which acts as the Proton donor.

It belongs to the glycosyl hydrolase 13 family. GlgB subfamily. As to quaternary structure, monomer.

It catalyses the reaction Transfers a segment of a (1-&gt;4)-alpha-D-glucan chain to a primary hydroxy group in a similar glucan chain.. It participates in glycan biosynthesis; glycogen biosynthesis. In terms of biological role, catalyzes the formation of the alpha-1,6-glucosidic linkages in glycogen by scission of a 1,4-alpha-linked oligosaccharide from growing alpha-1,4-glucan chains and the subsequent attachment of the oligosaccharide to the alpha-1,6 position. The protein is 1,4-alpha-glucan branching enzyme GlgB of Protochlamydia amoebophila (strain UWE25).